Reading from the N-terminus, the 93-residue chain is Putative transmembrane protein ORF25 (93 aa).

Helical transmembrane passes span 1–21, 22–42, and 60–80; these read MAGI…NVNA, FLVL…YASI, and LWIF…VMSL.

Its subcellular location is the host membrane. In His1 virus (isolate Australia/Victoria) (His1V), this protein is Putative transmembrane protein ORF25.